Here is a 371-residue protein sequence, read N- to C-terminus: Cytochrome b (371 aa).

The next 4 membrane-spanning stretches (helical) occupy residues 25–45, 69–90, 105–125, and 170–190; these read FGSM…FLAV, WMMQ…YIHI, WLSG…GYVL, and FFAL…LHIM. 2 residues coordinate heme b: H75 and H89. Heme b-binding residues include H174 and H188. H193 contacts a ubiquinone. 4 helical membrane-spanning segments follow: residues 218–238, 280–300, 312–332, and 339–358; these read YKDL…VSFL, LWGA…PFTH, IMQL…WAAT, and FTMI…IMNP.

The protein belongs to the cytochrome b family. As to quaternary structure, the cytochrome bc1 complex contains 3 respiratory subunits (MT-CYB, CYC1 and UQCRFS1), 2 core proteins (UQCRC1 and UQCRC2) and probably 6 low-molecular weight proteins. Requires heme b as cofactor.

It localises to the mitochondrion inner membrane. Component of the ubiquinol-cytochrome c reductase complex (complex III or cytochrome b-c1 complex) that is part of the mitochondrial respiratory chain. The b-c1 complex mediates electron transfer from ubiquinol to cytochrome c. Contributes to the generation of a proton gradient across the mitochondrial membrane that is then used for ATP synthesis. This chain is Cytochrome b (MT-CYB), found in Eryx miliaris nogaiorum (Black sand boa).